We begin with the raw amino-acid sequence, 58 residues long: Large ribosomal subunit protein bL32 (58 aa).

The protein belongs to the bacterial ribosomal protein bL32 family.

This Prochlorococcus marinus (strain MIT 9515) protein is Large ribosomal subunit protein bL32.